We begin with the raw amino-acid sequence, 227 residues long: Zeamatin (227 aa).

The first 20 residues, 1–20 (MAGSVAIVGIFVALLAVAGE), serve as a signal peptide directing secretion. 8 disulfide bridges follow: Cys-30/Cys-226, Cys-72/Cys-82, Cys-87/Cys-93, Cys-139/Cys-215, Cys-145/Cys-198, Cys-153/Cys-163, Cys-167/Cys-176, and Cys-177/Cys-185.

Belongs to the thaumatin family.

Has antifungal activity. Inhibits Candida albicans and Trichoderma reesei; marginal inhibition observed against Alternaria solani and Neurospora crassa. The protein is Zeamatin (Zlp) of Zea mays (Maize).